Consider the following 596-residue polypeptide: MKHIRNFSIIAHIDHGKSTLSDRLIQECGGLTDREMAAQVLDSMDIERERGITIKAQSVTLDYLANDGETYQLNFIDTPGHVDFSYEVSRSLAACEGALLVVDAGQGVEAQTLANCYTALEMDMDVVPVLNKIDLPQADPDRVAEEIEDIVGIEATDAVRCSAKTGIGIKDVLEVIVEQIPPPEGDPEGPLQALIIDSWFDSYLGVVSLVRIKNGILKKGDKFKVMSTGQNYNADRVGIFTPKQTDTTELKTGEVGFVIAGIKEIHGAPVGDTLTHSKHGAETPLAGFKKVKPQVYAGLFPISTDDYENFRDALNKLSLNDASLFFEPETSSALGFGFRIGFLGLLHMEIIQERLEREYNLELITTAPTVVYEIVQTNGETIYVDNPSDLPAVNNIAEMREPIVETNILVPKEYLGNVITLCIEKRGVQTNLVYHGNQVALTYELPMAEVVMDFFDRLKSTSRGYASLEYNFIRFEPADMVRLDILINGDRVDALAMIIHKGLIRSKGLALVNKMKELIPRQMFDIAVQAAVGSQIIARSSIKAMRKDVTAKCYGGDVSRKKKLLNKQKEGKKRMKQVGNVEVPQEAFLAVLKLND.

Residues 2-184 form the tr-type G domain; that stretch reads KHIRNFSIIA…VIVEQIPPPE (183 aa). Residues 14–19 and 131–134 each bind GTP; these read DHGKST and NKID.

The protein belongs to the TRAFAC class translation factor GTPase superfamily. Classic translation factor GTPase family. LepA subfamily.

It is found in the cell inner membrane. The enzyme catalyses GTP + H2O = GDP + phosphate + H(+). Required for accurate and efficient protein synthesis under certain stress conditions. May act as a fidelity factor of the translation reaction, by catalyzing a one-codon backward translocation of tRNAs on improperly translocated ribosomes. Back-translocation proceeds from a post-translocation (POST) complex to a pre-translocation (PRE) complex, thus giving elongation factor G a second chance to translocate the tRNAs correctly. Binds to ribosomes in a GTP-dependent manner. This chain is Elongation factor 4, found in Shewanella pealeana (strain ATCC 700345 / ANG-SQ1).